The following is a 124-amino-acid chain: MSEKWGVIHIYASYNNTIIHVTDITGAETIAKISGGMIVKNQKDESSPYAAMQGAFKIADMIREKGIDKVHIKVRATGGSKSKNPGPGAQAAIRALARAGIKIGRIEDATPIPHDGTTPKKGNR.

This sequence belongs to the universal ribosomal protein uS11 family. As to quaternary structure, part of the 30S ribosomal subunit.

Functionally, located on the platform of the 30S subunit. This chain is Small ribosomal subunit protein uS11, found in Methanococcus aeolicus (strain ATCC BAA-1280 / DSM 17508 / OCM 812 / Nankai-3).